A 124-amino-acid polypeptide reads, in one-letter code: TP53-target gene 3 protein (124 aa).

The segment covering 1-11 has biased composition (polar residues); it reads MRASPCISQPA. The disordered stretch occupies residues 1–42; sequence MRASPCISQPAASWHPRPSALRPTAGSGPDTRTPGTVEDGSA.

Strongly expressed in testis. Weakly expressed in heart, placenta and skeletal muscle.

The protein resides in the cytoplasm. The protein localises to the nucleus. Functionally, may play a significant role in p53/TP53-mediating signaling pathway. This Homo sapiens (Human) protein is TP53-target gene 3 protein.